Consider the following 142-residue polypeptide: Hemoglobin subunit alpha-2 (142 aa).

Positions 2-142 (VLSAADKSNV…VSTVLTSKYR (141 aa)) constitute a Globin domain. Histidine 59 serves as a coordination point for O2. Histidine 88 serves as a coordination point for heme b.

This sequence belongs to the globin family. Heterotetramer of two alpha chains and two beta chains.

Functionally, involved in oxygen transport from the lung to the various peripheral tissues. Its function is as follows. Hemopressin acts as an antagonist peptide of the cannabinoid receptor CNR1. Hemopressin-binding efficiently blocks cannabinoid receptor CNR1 and subsequent signaling. This is Hemoglobin subunit alpha-2 (HBA2) from Capra hircus (Goat).